The primary structure comprises 111 residues: Large ribosomal subunit protein uL29 (111 aa).

The segment at 1 to 85 (MTVAKELRQK…TKKTNEAAVN (85 aa)) is large ribosomal subunit protein uL29. The unknown stretch occupies residues 86–111 (AWKQHLEANKAKLLKSRAKREDASKK).

The protein belongs to the universal ribosomal protein uL29 family.

The protein is Large ribosomal subunit protein uL29 of Mycoplasma pneumoniae (strain ATCC 29342 / M129 / Subtype 1) (Mycoplasmoides pneumoniae).